The sequence spans 291 residues: Putative fatty acid elongase 4 (291 aa).

Helical transmembrane passes span 46–66 (ILFQ…FILI), 79–99 (FTLK…SIIA), and 254–274 (NLYL…QFFV).

The protein belongs to the ELO family.

It localises to the membrane. It carries out the reaction a very-long-chain acyl-CoA + malonyl-CoA + H(+) = a very-long-chain 3-oxoacyl-CoA + CO2 + CoA. Its pathway is lipid metabolism; fatty acid biosynthesis. Functionally, could be implicated in synthesis of very long chain fatty acids. The polypeptide is Putative fatty acid elongase 4 (elo-4) (Caenorhabditis elegans).